The sequence spans 949 residues: AP-1 complex subunit beta-1 (949 aa).

The residue at position 318 (lysine 318) is an N6-acetyllysine. A 3'-nitrotyrosine modification is found at tyrosine 574. A disordered region spans residues 592–623; it reads SLPPRTASSESTESPEAAPAGAPASDQPDVIP. The span at 594-616 shows a compositional bias: low complexity; it reads PPRTASSESTESPEAAPAGAPAS.

Belongs to the adaptor complexes large subunit family. As to quaternary structure, adaptor protein complex 1 (AP-1) is a heterotetramer composed of two large adaptins (gamma-type subunit AP1G1 and beta-type subunit AP1B1), a medium adaptin (mu-type subunit AP1M1 or AP1M2) and a small adaptin (sigma-type subunit AP1S1 or AP1S2 or AP1S3). In terms of processing, the N-terminus is blocked.

It localises to the golgi apparatus. The protein resides in the cytoplasmic vesicle. It is found in the clathrin-coated vesicle membrane. Functionally, subunit of clathrin-associated adaptor protein complex 1 that plays a role in protein sorting in the late-Golgi/trans-Golgi network (TGN) and/or endosomes. The AP complexes mediate both the recruitment of clathrin to membranes and the recognition of sorting signals within the cytosolic tails of transmembrane cargo molecules. This Rattus norvegicus (Rat) protein is AP-1 complex subunit beta-1 (Ap1b1).